Here is a 366-residue protein sequence, read N- to C-terminus: Aliphatic nitrilase (366 aa).

A CN hydrolase domain is found at 8–282 (FKVAAVQAQP…EGILYADIDL (275 aa)). Glutamate 48 acts as the Proton acceptor in catalysis. The Proton donor role is filled by lysine 131. Catalysis depends on cysteine 165, which acts as the Nucleophile. Residues 346 to 366 (DEQRALPSTHSDETDRATASI) form a disordered region. Basic and acidic residues predominate over residues 355–366 (HSDETDRATASI).

Belongs to the carbon-nitrogen hydrolase superfamily. Nitrilase family. Homodimer.

It catalyses the reaction an aliphatic nitrile + 2 H2O = a carboxylate + NH4(+). The sequence is that of Aliphatic nitrilase (nitA) from Rhodococcus rhodochrous.